A 1431-amino-acid chain; its full sequence is Caskin-1 (1431 aa).

6 ANK repeats span residues 48 to 77, 81 to 110, 114 to 143, 147 to 176, 188 to 217, and 220 to 249; these read DGFS…AVDI, KGMR…AVNV, EGHI…NPCM, SGKT…CAAL, NGTS…DINR, and KSGT…NAQV. Phosphotyrosine is present on Tyr253. The SH3 domain occupies 281–347; it reads SAALQVRATK…PSSLGEAIVK (67 aa). Residues 348-372 are disordered; the sequence is RAGSRTGSEPSPPQGGGSLGPSAPP. Ser358 carries the phosphoserine modification. Residues 375–471 are CASK-binding; that stretch reads IWVLRKPFAG…PKKLESASAS (97 aa). Omega-N-methylarginine is present on Arg398. Polar residues predominate over residues 420-430; that stretch reads SQKSVSESSPG. Positions 420–471 are disordered; it reads SQKSVSESSPGDSPVKPPEGSSGAARSQPPAAHAGQVYGEQPPKKLESASAS. 2 positions are modified to phosphoserine: Ser423 and Ser432. 2 consecutive SAM domains span residues 476–539 and 545–609; these read KSAE…LNIP and HKPA…LAEL. Residues Ser637 and Ser650 each carry the phosphoserine modification. A compositionally biased stretch (low complexity) spans 669 to 679; it reads LSGPAEAGAAA. Disordered regions lie at residues 669–1000 and 1016–1041; these read LSGP…TGSA and GGGG…EPGR. A compositionally biased stretch (polar residues) spans 692–712; sequence RTTSRESSLSGRARHISSSQE. A phosphoserine mark is found at Ser723 and Ser728. Position 741 is a phosphothreonine (Thr741). Phosphoserine is present on Ser791. Over residues 848 to 860 the composition is skewed to pro residues; that stretch reads PPAPGPAPPPVPA. Phosphoserine is present on residues Ser891, Ser893, and Ser989. Over residues 1028–1037 the composition is skewed to pro residues; sequence GHPTPRPASP. Thr1067 carries the post-translational modification Phosphothreonine. Residue Ser1069 is modified to Phosphoserine. Disordered regions lie at residues 1072–1372 and 1389–1410; these read VTGL…RQKL and KIRQ…STGS. Residues 1148 to 1160 show a composition bias toward basic and acidic residues; sequence DTVKRRPKAKEPD. Positions 1191–1215 are enriched in pro residues; sequence PELPPPPPPAEPPPADLMQLPPLPL. Positions 1236-1247 are enriched in polar residues; sequence QPVSKIQGSPTP. Ser1259 is modified (phosphoserine). Thr1268 carries the post-translational modification Phosphothreonine. Positions 1268–1283 are enriched in pro residues; the sequence is TPPPVSPKPPPPPTAP. Composition is skewed to low complexity over residues 1284 to 1299, 1309 to 1327, and 1345 to 1359; these read KPAK…SATP, PPAA…SASP, and PRAA…PVAS. A Phosphoserine modification is found at Ser1363. The span at 1389-1407 shows a compositional bias: basic and acidic residues; sequence KIRQEDGQGPRPSSIEEKS.

As to quaternary structure, binds the CaM kinase domain of CASK. Forms a ternary complex with CASK and LIN7A, LIN7B or LIN7C. Competes with APBA1 that forms a similar complex with CASK and LIN7 proteins. The tripartite complex CASKIN1/CASK/LIN7(A/B/C) binds the cytoplasmic tail of NRXN1. Polymerizes, via the tandem SAM domains, to form long, 8 nM wide fibers, upon which other proteins can assemble.

The protein resides in the cytoplasm. May link the scaffolding protein CASK to downstream intracellular effectors. The polypeptide is Caskin-1 (Caskin1) (Mus musculus (Mouse)).